The following is a 352-amino-acid chain: Protein RecA (352 aa).

65-72 (GPESSGKT) provides a ligand contact to ATP.

The protein belongs to the RecA family.

Its subcellular location is the cytoplasm. Can catalyze the hydrolysis of ATP in the presence of single-stranded DNA, the ATP-dependent uptake of single-stranded DNA by duplex DNA, and the ATP-dependent hybridization of homologous single-stranded DNAs. It interacts with LexA causing its activation and leading to its autocatalytic cleavage. Plays a functional role in the DNA rearrangement associated with the phenotypic switching from a pathogenic smooth to a nonpathogenic rough form in this bacterium. This chain is Protein RecA, found in Pseudomonas tolaasii.